A 324-amino-acid polypeptide reads, in one-letter code: Uric acid degradation bifunctional protein TTL (324 aa).

The residue at position 2 (alanine 2) is an N-acetylalanine. The interval 2–29 is required for BRI1-binding; sequence AMEIGEDEWKVCCGSSEFAKQMSTSGPL. The interval 2–161 is OHCU decarboxylase; the sequence is AMEIGEDEWK…LRMAKLFSDK (160 aa). The Proton donor; for OHCU decarboxylase activity role is filled by histidine 58. Positions 58, 59, 80, 111, 113, and 115 each coordinate (S)-allantoin. The tract at residues 178 to 324 is HIU hydrolase; that stretch reads KPQDRLRIIG…PFSFSTYRGS (147 aa). The Internal peroxisomal targeting signal (PTS2) signature appears at 182–190; it reads RLRIIGGHL.

This sequence in the N-terminal section; belongs to the OHCU decarboxylase family. The protein in the C-terminal section; belongs to the transthyretin family. 5-hydroxyisourate hydrolase subfamily. As to quaternary structure, homodimer. Forms tetramers. Interacts with BRI1 in a kinase-dependent manner. Interacts with B1L. Post-translationally, phosphorylated by BRI1 in vitro. In terms of tissue distribution, expressed ubiquitously with highest levels in flowers buds and elongating inflorescences. Mainly expressed in stems and leaves, and, to a lower extent, in flowers, flower buds and seedlings. As to expression, strongly expressed in flower buds and leaves, to a lower extent in stems, and at low levels in seedlings and flowers.

The protein localises to the cell membrane. Its subcellular location is the peroxisome. The protein resides in the cytoplasm. It localises to the cytosol. The enzyme catalyses 5-hydroxyisourate + H2O = 5-hydroxy-2-oxo-4-ureido-2,5-dihydro-1H-imidazole-5-carboxylate + H(+). The catalysed reaction is 5-hydroxy-2-oxo-4-ureido-2,5-dihydro-1H-imidazole-5-carboxylate + H(+) = (S)-allantoin + CO2. Its pathway is purine metabolism; urate degradation; (S)-allantoin from urate: step 2/3. It functions in the pathway purine metabolism; urate degradation; (S)-allantoin from urate: step 3/3. In terms of biological role, involved in the last two steps of the degradation of uric acid, i.e. the hydrolysis of 5-hydroxyisourate (HIU) to 2-oxo-4-hydroxy-4-carboxy-5-ureidoimidazoline (OHCU) and its stereoselective decarboxylation to (S)-allantoin, a major ureide compound. Might function as a negative regulator to modulate brassinosteroid-mediated plant growth. Together with B1L, prevents plant growth and development, but by opposition to B1L, negatively regulates cold tolerance, probably in a brassinosteroid (BR) and allantoin-dependent manner. In Arabidopsis thaliana (Mouse-ear cress), this protein is Uric acid degradation bifunctional protein TTL.